A 104-amino-acid polypeptide reads, in one-letter code: Large ribosomal subunit protein bL21 (104 aa).

Belongs to the bacterial ribosomal protein bL21 family. As to quaternary structure, part of the 50S ribosomal subunit. Contacts protein L20.

Its function is as follows. This protein binds to 23S rRNA in the presence of protein L20. The polypeptide is Large ribosomal subunit protein bL21 (Clostridium botulinum (strain 657 / Type Ba4)).